A 113-amino-acid chain; its full sequence is Cysteine proteinase inhibitor 6 (113 aa).

A signal peptide spans 1–18 (MAMTTRTLLLAAVCAAAA). Positions 65–69 (QVVSG) match the Secondary area of contact motif.

It belongs to the cystatin family. Phytocystatin subfamily.

Its subcellular location is the secreted. Its function is as follows. Specific inhibitor of cysteine proteinases. Probably involved in the regulation of endogenous processes and in defense against pests and pathogens. This is Cysteine proteinase inhibitor 6 from Oryza sativa subsp. japonica (Rice).